A 117-amino-acid chain; its full sequence is Large ribosomal subunit protein bL20c (117 aa).

This sequence belongs to the bacterial ribosomal protein bL20 family.

Its subcellular location is the plastid. The protein localises to the chloroplast. Its function is as follows. Binds directly to 23S ribosomal RNA and is necessary for the in vitro assembly process of the 50S ribosomal subunit. It is not involved in the protein synthesizing functions of that subunit. This is Large ribosomal subunit protein bL20c from Arabis hirsuta (Hairy rock-cress).